Consider the following 210-residue polypeptide: Probable GTP-binding protein EngB (210 aa).

The EngB-type G domain occupies 30-204 (QGYEVAFAGR…YRVLADWMEL (175 aa)). Residues 38-45 (GRSNAGKS), 64-68 (GRTQL), 82-85 (DLPG), 149-152 (TKAD), and 182-185 (LFSA) contribute to the GTP site. Mg(2+) is bound by residues S45 and T66.

The protein belongs to the TRAFAC class TrmE-Era-EngA-EngB-Septin-like GTPase superfamily. EngB GTPase family. Mg(2+) is required as a cofactor.

Necessary for normal cell division and for the maintenance of normal septation. This chain is Probable GTP-binding protein EngB, found in Pseudomonas entomophila (strain L48).